We begin with the raw amino-acid sequence, 129 residues long: Small ribosomal subunit protein uS11 (129 aa).

The protein belongs to the universal ribosomal protein uS11 family. As to quaternary structure, part of the 30S ribosomal subunit. Interacts with proteins S7 and S18. Binds to IF-3.

Functionally, located on the platform of the 30S subunit, it bridges several disparate RNA helices of the 16S rRNA. Forms part of the Shine-Dalgarno cleft in the 70S ribosome. This Jannaschia sp. (strain CCS1) protein is Small ribosomal subunit protein uS11.